A 260-amino-acid polypeptide reads, in one-letter code: Recombination-promoting nuclease RpnD (260 aa).

Belongs to the Rpn/YhgA-like nuclease family.

Its function is as follows. A low activity DNA endonuclease probably yielding 3'-hydroxyl ends. Involved in RecA-independent recombination and horizontal gene transfer. The chain is Recombination-promoting nuclease RpnD (rpnD) from Escherichia coli O157:H7.